Here is a 401-residue protein sequence, read N- to C-terminus: Exodeoxyribonuclease 7 large subunit (401 aa).

The protein belongs to the XseA family. Heterooligomer composed of large and small subunits.

It is found in the cytoplasm. It catalyses the reaction Exonucleolytic cleavage in either 5'- to 3'- or 3'- to 5'-direction to yield nucleoside 5'-phosphates.. In terms of biological role, bidirectionally degrades single-stranded DNA into large acid-insoluble oligonucleotides, which are then degraded further into small acid-soluble oligonucleotides. This Clostridium botulinum (strain Loch Maree / Type A3) protein is Exodeoxyribonuclease 7 large subunit.